A 457-amino-acid chain; its full sequence is Phosphoglucosamine mutase (457 aa).

Ser-103 acts as the Phosphoserine intermediate in catalysis. Mg(2+) is bound by residues Ser-103, Asp-245, Asp-247, and Asp-249. At Ser-103 the chain carries Phosphoserine.

It belongs to the phosphohexose mutase family. Mg(2+) is required as a cofactor. In terms of processing, activated by phosphorylation.

It carries out the reaction alpha-D-glucosamine 1-phosphate = D-glucosamine 6-phosphate. Its function is as follows. Catalyzes the conversion of glucosamine-6-phosphate to glucosamine-1-phosphate. The polypeptide is Phosphoglucosamine mutase (Syntrophotalea carbinolica (strain DSM 2380 / NBRC 103641 / GraBd1) (Pelobacter carbinolicus)).